A 287-amino-acid polypeptide reads, in one-letter code: UPF0276 protein ACIAD0933 (287 aa).

It belongs to the UPF0276 family.

The chain is UPF0276 protein ACIAD0933 from Acinetobacter baylyi (strain ATCC 33305 / BD413 / ADP1).